The sequence spans 88 residues: Acylphosphatase (88 aa).

Positions alanine 3–glycine 88 constitute an Acylphosphatase-like domain. Residues arginine 18 and asparagine 36 contribute to the active site.

The protein belongs to the acylphosphatase family.

It carries out the reaction an acyl phosphate + H2O = a carboxylate + phosphate + H(+). This Xanthomonas euvesicatoria pv. vesicatoria (strain 85-10) (Xanthomonas campestris pv. vesicatoria) protein is Acylphosphatase (acyP).